The sequence spans 254 residues: 5-oxoprolinase subunit A (254 aa).

This sequence belongs to the LamB/PxpA family. Forms a complex composed of PxpA, PxpB and PxpC.

It catalyses the reaction 5-oxo-L-proline + ATP + 2 H2O = L-glutamate + ADP + phosphate + H(+). Functionally, catalyzes the cleavage of 5-oxoproline to form L-glutamate coupled to the hydrolysis of ATP to ADP and inorganic phosphate. The polypeptide is 5-oxoprolinase subunit A (Gluconobacter oxydans (strain 621H) (Gluconobacter suboxydans)).